A 445-amino-acid polypeptide reads, in one-letter code: Na(+)-translocating NADH-quinone reductase subunit A (445 aa).

This sequence belongs to the NqrA family. In terms of assembly, composed of six subunits; NqrA, NqrB, NqrC, NqrD, NqrE and NqrF.

The catalysed reaction is a ubiquinone + n Na(+)(in) + NADH + H(+) = a ubiquinol + n Na(+)(out) + NAD(+). In terms of biological role, NQR complex catalyzes the reduction of ubiquinone-1 to ubiquinol by two successive reactions, coupled with the transport of Na(+) ions from the cytoplasm to the periplasm. NqrA to NqrE are probably involved in the second step, the conversion of ubisemiquinone to ubiquinol. The sequence is that of Na(+)-translocating NADH-quinone reductase subunit A from Pseudomonas aeruginosa (strain ATCC 15692 / DSM 22644 / CIP 104116 / JCM 14847 / LMG 12228 / 1C / PRS 101 / PAO1).